The chain runs to 254 residues: RING-H2 finger protein ATL28 (254 aa).

A helical membrane pass occupies residues 25-45 (VVLTGVLLFVIFAGFFSLFLW). The RING-type; atypical zinc-finger motif lies at 103–145 (CAICLSEFSDEDTVRLITVCRHPFHSNCIDLWFELHKTCPVCR).

The protein belongs to the RING-type zinc finger family. ATL subfamily.

The protein resides in the membrane. It carries out the reaction S-ubiquitinyl-[E2 ubiquitin-conjugating enzyme]-L-cysteine + [acceptor protein]-L-lysine = [E2 ubiquitin-conjugating enzyme]-L-cysteine + N(6)-ubiquitinyl-[acceptor protein]-L-lysine.. Its pathway is protein modification; protein ubiquitination. The protein is RING-H2 finger protein ATL28 (ATL28) of Arabidopsis thaliana (Mouse-ear cress).